The following is a 778-amino-acid chain: Protein SPT2 homolog (778 aa).

Disordered regions lie at residues 1 to 21, 50 to 625, and 639 to 685; these read MDFHSVLKMAAAKPGSDGIAK, KKDE…AKPK, and VPKS…DDDD. Residues 1 to 665 form an important for interaction with DNA region; it reads MDFHSVLKMA…PGHRPAMRPP (665 aa). The stretch at 44-83 forms a coiled coil; sequence VQAFLRKKDEESRRKETVEKRKKEDLLAKRKELKHDRKAR. A compositionally biased stretch (basic and acidic residues) spans 50–78; that stretch reads KKDEESRRKETVEKRKKEDLLAKRKELKH. Residues 114 to 135 are compositionally biased toward acidic residues; it reads EEDQNDNMAAEGEEYMTEEELY. The span at 153–167 shows a compositional bias: pro residues; the sequence is QKVPKPAPGKKPPTP. The span at 190–227 shows a compositional bias: basic and acidic residues; sequence RPVKKEERLRTAEELKELEFLERKAQKADRKDPKRNEQ. Residues 193–221 adopt a coiled-coil conformation; that stretch reads KKEERLRTAEELKELEFLERKAQKADRKD. Positions 242 to 269 are enriched in polar residues; sequence LKGTHSGNSKSSSTEQNGTIRKSSSDTG. Residues 270-286 show a composition bias toward basic and acidic residues; the sequence is SRTEKSGSVFHTKESKK. Over residues 312–335 the composition is skewed to low complexity; it reads SSQPSAASNSAFGRPSGSARPSGS. Composition is skewed to gly residues over residues 336 to 357 and 365 to 384; these read SGPGRPLGGSGSSSGKSTGGSA and GGSGSGSGKPMGGSGSGKPI. The segment covering 385–394 has biased composition (low complexity); the sequence is GGLHSSHGSG. The segment covering 395 to 417 has biased composition (gly residues); that stretch reads KPTGGTGSGSGKPTGASGSGSGK. Composition is skewed to low complexity over residues 418–493 and 506–559; these read PTGS…SGSA and GSGS…PSSS. Positions 588–604 are enriched in polar residues; it reads VRPNSTSVPGSARSSLG. Over residues 662–671 the composition is skewed to pro residues; it reads MRPPGPPLPP. Positions 666-778 are important for interaction with histones; that stretch reads GPPLPPITSS…QLKAAKKMSR (113 aa). A coiled-coil region spans residues 735 to 778; sequence REQQKEEARSLRLGIQEDLEELQREEEELKRKAKQLKAAKKMSR.

It belongs to the SPT2 family. As to quaternary structure, interacts with histones. Interacts with a heterotetrameric complex formed by histone H3 and H4, especially when the histone tetramer is not bound to DNA.

The protein resides in the nucleus. It is found in the nucleolus. In terms of biological role, histone chaperone that stabilizes pre-existing histone tetramers and regulates replication-independent histone exchange on chromatin. Required for normal chromatin refolding in the coding region of transcribed genes, and for the suppression of spurious transcription. Binds DNA and histones and promotes nucleosome assembly (in vitro). Facilitates formation of tetrameric histone complexes containing histone H3 and H4. Modulates RNA polymerase 1-mediated transcription. Binds DNA, with a preference for branched DNA species, such as Y-form DNA and Holliday junction DNA. This is Protein SPT2 homolog (spty2d1) from Xenopus tropicalis (Western clawed frog).